The following is a 99-amino-acid chain: ATP-dependent Clp protease adapter protein ClpS (99 aa).

It belongs to the ClpS family. As to quaternary structure, binds to the N-terminal domain of the chaperone ClpA.

Its function is as follows. Involved in the modulation of the specificity of the ClpAP-mediated ATP-dependent protein degradation. The sequence is that of ATP-dependent Clp protease adapter protein ClpS from Helicobacter hepaticus (strain ATCC 51449 / 3B1).